A 265-amino-acid chain; its full sequence is Transcriptional activator TAF-1 (265 aa).

Disordered regions lie at residues 1–133 and 167–218; these read AHGG…SEKA and THLK…KQAE. Over residues 35 to 46 the composition is skewed to low complexity; sequence ASLSLDASAKSS. 2 stretches are compositionally biased toward basic and acidic residues: residues 103 to 115 and 191 to 209; these read RETT…DSKS and NERE…ESAR. A bZIP domain is found at 194–257; that stretch reads ELKREKRKQS…EKLKLENAAL (64 aa). A basic motif region spans residues 196–215; it reads KREKRKQSNRESARRSRLRK. A leucine-zipper region spans residues 222 to 257; it reads LAIRVQSLTAENMTLKSEINKLMENSEKLKLENAAL.

The protein belongs to the bZIP family. As to expression, present mainly in roots. Barely detectable in stems and leaves.

The protein localises to the nucleus. In terms of biological role, trans-activator of a beta-glucuronidase (GUS) reporter gene. Binds to a G-box-related element, (5'-GCAACGTGGC-3'). Also binds to the HEX-motif of wheat histone H3 promoter. This is Transcriptional activator TAF-1 (TAF1) from Nicotiana tabacum (Common tobacco).